A 227-amino-acid chain; its full sequence is PKHD-type hydroxylase NE2125 (227 aa).

The 102-residue stretch at 78–179 (KIVPPFFNRY…RLACFMFIQS (102 aa)) folds into the Fe2OG dioxygenase domain. Positions 97, 99, and 160 each coordinate Fe cation. Arginine 170 contributes to the 2-oxoglutarate binding site.

Fe(2+) is required as a cofactor. It depends on L-ascorbate as a cofactor.

In Nitrosomonas europaea (strain ATCC 19718 / CIP 103999 / KCTC 2705 / NBRC 14298), this protein is PKHD-type hydroxylase NE2125.